The primary structure comprises 357 residues: GDP-mannose transporter 2 (357 aa).

The Cytoplasmic segment spans residues M1–S33. The chain crosses the membrane as a helical span at residues F34–I54. At S55–S68 the chain is on the lumenal side. A helical membrane pass occupies residues W69 to A89. At C90–A107 the chain is on the cytoplasmic side. Residues Q108 to L128 traverse the membrane as a helical segment. Residue Q129 is a topological domain, lumenal. The chain crosses the membrane as a helical span at residues F130–G150. Topologically, residues E151–P161 are cytoplasmic. The chain crosses the membrane as a helical span at residues L162–D181. Over I182–S196 the chain is Lumenal. An N-linked (GlcNAc...) asparagine glycan is attached at N184. A helical transmembrane segment spans residues T197–F217. Residues S218–N236 lie on the Cytoplasmic side of the membrane. A helical membrane pass occupies residues W237–L257. Residues A258 to S277 are Lumenal-facing. Residues L278–W298 traverse the membrane as a helical segment. Residues C299–T306 are Cytoplasmic-facing. A helical transmembrane segment spans residues T307–F327. The Lumenal segment spans residues A328–T332. Residues F333–A352 form a helical membrane-spanning segment. Topologically, residues K353–A357 are cytoplasmic.

The protein belongs to the TPT transporter family. SLC35D subfamily. In terms of assembly, homooligomer.

Its subcellular location is the golgi apparatus membrane. The protein resides in the cytoplasmic vesicle membrane. It is found in the endoplasmic reticulum membrane. Its function is as follows. Involved in the import of GDP-mannose from the cytoplasm into the Golgi lumen. The chain is GDP-mannose transporter 2 (gmt2) from Neosartorya fischeri (strain ATCC 1020 / DSM 3700 / CBS 544.65 / FGSC A1164 / JCM 1740 / NRRL 181 / WB 181) (Aspergillus fischerianus).